The sequence spans 642 residues: Kinesin-like protein KIN-7L (642 aa).

Residues 3-337 enclose the Kinesin motor domain; sequence KISVAVRFRP…LQFASRAKCV (335 aa). A compositionally biased stretch (low complexity) spans 12-27; that stretch reads PPTTAAPAADQSPSST. The interval 12–33 is disordered; the sequence is PPTTAAPAADQSPSSTGGDREW. 94–101 contacts ATP; that stretch reads GQTSSGKT. Coiled coils occupy residues 343 to 428 and 540 to 612; these read VNEI…SNTS and RQQL…FSQA.

The protein belongs to the TRAFAC class myosin-kinesin ATPase superfamily. Kinesin family. KIN-7 subfamily.

This is Kinesin-like protein KIN-7L from Oryza sativa subsp. japonica (Rice).